The sequence spans 613 residues: ATP-dependent RNA helicase DeaD (613 aa).

A Q motif motif is present at residues 5-33 (ITFNDLGLPEFILKAVSDLGFETPSPIQQ). A Helicase ATP-binding domain is found at 36-207 (IPHLLNGNDV…KRFMNDPQEV (172 aa)). 49 to 56 (AQTGSGKT) contacts ATP. The DEAD box signature appears at 155 to 158 (DEAD). In terms of domain architecture, Helicase C-terminal spans 231-378 (KNEALLRFLE…EVELPNHLVL (148 aa)). Disordered stretches follow at residues 434–476 (ILPP…PQPM) and 552–613 (AVKS…RSSF). 2 stretches are compositionally biased toward basic and acidic residues: residues 440–469 (PMEKRRRERNDRGDRRENPRSAERRGERKG) and 556–613 (DNSR…RSSF).

This sequence belongs to the DEAD box helicase family. DeaD/CsdA subfamily.

Its subcellular location is the cytoplasm. It catalyses the reaction ATP + H2O = ADP + phosphate + H(+). In terms of biological role, DEAD-box RNA helicase involved in various cellular processes at low temperature, including ribosome biogenesis, mRNA degradation and translation initiation. The polypeptide is ATP-dependent RNA helicase DeaD (Haemophilus influenzae (strain ATCC 51907 / DSM 11121 / KW20 / Rd)).